We begin with the raw amino-acid sequence, 466 residues long: MVFLSGNASDSSNCTHPPAPVNISKAILLGVILGGLILFGVLGNILVILSVACHRHLHSVTHYYIVNLAVADLLLTSTVLPFSAIFEILGYWAFGRVFCNIWAAVDVLCCTASIISLCVISIDRYIGVSYPLRYPTIVTQRRGLRALLCVWAFSLVISVGPLFGWRQPAPDDETICQINEEPGYVLFSALGSFYVPLTIILAMYCRVYVVAKRESRGLKSGLKTDKSDSEQVTLRIHRKNAPAGGSGVASAKNKTHFSVRLLKFSREKKAAKTLGIVVGCFVLCWLPFFLVMPIGSFFPDFKPPETVFKIVFWLGYLNSCINPIIYPCSSQEFKKAFQNVLKIQCLRRKQSSKHALGYTLHAPSQALEGQHKDMVRIPVGSGETFYKISKTDGVCEWKFFSSMPRGSARITVPKDQSACTTARVRSKSFLQVCCCVGPSTPNPGENHQVPTIKIHTISLSENGEEV.

The Extracellular portion of the chain corresponds to 1–25 (MVFLSGNASDSSNCTHPPAPVNISK). Residues N7, N13, and N22 are each glycosylated (N-linked (GlcNAc...) asparagine). Residues 26–51 (AILLGVILGGLILFGVLGNILVILSV) traverse the membrane as a helical segment. The Cytoplasmic segment spans residues 52–63 (ACHRHLHSVTHY). The helical transmembrane segment at 64–89 (YIVNLAVADLLLTSTVLPFSAIFEIL) threads the bilayer. The Extracellular portion of the chain corresponds to 90–99 (GYWAFGRVFC). A helical membrane pass occupies residues 100–122 (NIWAAVDVLCCTASIISLCVISI). The Cytoplasmic segment spans residues 123–143 (DRYIGVSYPLRYPTIVTQRRG). The helical transmembrane segment at 144-168 (LRALLCVWAFSLVISVGPLFGWRQP) threads the bilayer. At 169-181 (APDDETICQINEE) the chain is on the extracellular side. A helical membrane pass occupies residues 182 to 205 (PGYVLFSALGSFYVPLTIILAMYC). Residues 206–272 (RVYVVAKRES…KFSREKKAAK (67 aa)) are Cytoplasmic-facing. Residues 273–297 (TLGIVVGCFVLCWLPFFLVMPIGSF) form a helical membrane-spanning segment. Topologically, residues 298 to 304 (FPDFKPP) are extracellular. The chain crosses the membrane as a helical span at residues 305-329 (ETVFKIVFWLGYLNSCINPIIYPCS). Over 330–466 (SQEFKKAFQN…ISLSENGEEV (137 aa)) the chain is Cytoplasmic. Residues 334–349 (KKAFQNVLKIQCLRRK) carry the Nuclear localization signal motif. Residue C345 is the site of S-palmitoyl cysteine attachment.

The protein belongs to the G-protein coupled receptor 1 family. Adrenergic receptor subfamily. ADRA1A sub-subfamily. As to quaternary structure, homo- and heterooligomer. Heterooligomerizes with ADRA1B homooligomers in cardiac myocytes. Interacts with CAVIN4. Abundant in liver, vas deferens, brain, and aorta, but not in heart.

It is found in the nucleus membrane. The protein localises to the cell membrane. The protein resides in the cytoplasm. It localises to the membrane. Its subcellular location is the caveola. Functionally, this alpha-adrenergic receptor mediates its action by association with G proteins that activate a phosphatidylinositol-calcium second messenger system. Its effect is mediated by G(q) and G(11) proteins. Nuclear ADRA1A-ADRA1B heterooligomers regulate phenylephrine (PE)-stimulated ERK signaling in cardiac myocytes. The chain is Alpha-1A adrenergic receptor (ADRA1A) from Oryctolagus cuniculus (Rabbit).